Reading from the N-terminus, the 442-residue chain is UDP-N-acetylmuramoylalanine--D-glutamate ligase (442 aa).

Position 109–115 (109–115) interacts with ATP; that stretch reads GSNGKTT.

Belongs to the MurCDEF family.

The protein resides in the cytoplasm. It carries out the reaction UDP-N-acetyl-alpha-D-muramoyl-L-alanine + D-glutamate + ATP = UDP-N-acetyl-alpha-D-muramoyl-L-alanyl-D-glutamate + ADP + phosphate + H(+). It functions in the pathway cell wall biogenesis; peptidoglycan biosynthesis. Cell wall formation. Catalyzes the addition of glutamate to the nucleotide precursor UDP-N-acetylmuramoyl-L-alanine (UMA). The polypeptide is UDP-N-acetylmuramoylalanine--D-glutamate ligase (Solibacter usitatus (strain Ellin6076)).